Reading from the N-terminus, the 359-residue chain is UDP-N-acetylglucosamine--N-acetylmuramyl-(pentapeptide) pyrophosphoryl-undecaprenol N-acetylglucosamine transferase (359 aa).

UDP-N-acetyl-alpha-D-glucosamine-binding positions include 15–17 (TGG), Asn-127, Arg-166, Ser-191, Ile-245, 264–269 (ALTVSE), and Gln-290.

Belongs to the glycosyltransferase 28 family. MurG subfamily.

Its subcellular location is the cell inner membrane. The catalysed reaction is di-trans,octa-cis-undecaprenyl diphospho-N-acetyl-alpha-D-muramoyl-L-alanyl-D-glutamyl-meso-2,6-diaminopimeloyl-D-alanyl-D-alanine + UDP-N-acetyl-alpha-D-glucosamine = di-trans,octa-cis-undecaprenyl diphospho-[N-acetyl-alpha-D-glucosaminyl-(1-&gt;4)]-N-acetyl-alpha-D-muramoyl-L-alanyl-D-glutamyl-meso-2,6-diaminopimeloyl-D-alanyl-D-alanine + UDP + H(+). Its pathway is cell wall biogenesis; peptidoglycan biosynthesis. Functionally, cell wall formation. Catalyzes the transfer of a GlcNAc subunit on undecaprenyl-pyrophosphoryl-MurNAc-pentapeptide (lipid intermediate I) to form undecaprenyl-pyrophosphoryl-MurNAc-(pentapeptide)GlcNAc (lipid intermediate II). The chain is UDP-N-acetylglucosamine--N-acetylmuramyl-(pentapeptide) pyrophosphoryl-undecaprenol N-acetylglucosamine transferase from Pseudomonas putida (strain W619).